Reading from the N-terminus, the 145-residue chain is Large ribosomal subunit protein uL11 (145 aa).

Belongs to the universal ribosomal protein uL11 family. As to quaternary structure, part of the ribosomal stalk of the 50S ribosomal subunit. Interacts with L10 and the large rRNA to form the base of the stalk. L10 forms an elongated spine to which L12 dimers bind in a sequential fashion forming a multimeric L10(L12)X complex. In terms of processing, one or more lysine residues are methylated.

Functionally, forms part of the ribosomal stalk which helps the ribosome interact with GTP-bound translation factors. The polypeptide is Large ribosomal subunit protein uL11 (Coxiella burnetii (strain Dugway 5J108-111)).